Reading from the N-terminus, the 465-residue chain is Probable dipeptidase A (465 aa).

Cys3 is a catalytic residue.

It belongs to the peptidase C69 family.

It carries out the reaction an L-aminoacyl-L-amino acid + H2O = 2 an L-alpha-amino acid. This is Probable dipeptidase A (pepDA) from Streptococcus pyogenes serotype M3 (strain SSI-1).